We begin with the raw amino-acid sequence, 260 residues long: Ribosomal RNA small subunit methyltransferase G (260 aa).

S-adenosyl-L-methionine is bound by residues glycine 111, phenylalanine 116, and arginine 181.

This sequence belongs to the methyltransferase superfamily. RNA methyltransferase RsmG family.

It is found in the cytoplasm. The catalysed reaction is guanosine(527) in 16S rRNA + S-adenosyl-L-methionine = N(7)-methylguanosine(527) in 16S rRNA + S-adenosyl-L-homocysteine. Specifically methylates the N7 position of guanine in position 527 of 16S rRNA. This chain is Ribosomal RNA small subunit methyltransferase G, found in Nitrobacter hamburgensis (strain DSM 10229 / NCIMB 13809 / X14).